Here is a 585-residue protein sequence, read N- to C-terminus: Chaperonin GroEL, chloroplastic (585 aa).

ATP is bound by residues 55-58 (TLGP), 113-117 (DGTTT), glycine 442, 507-509 (NAA), and aspartate 523.

Belongs to the chaperonin (HSP60) family. Forms a cylinder of 14 subunits composed of two heptameric rings stacked back-to-back. Interacts with the co-chaperonin GroES.

It localises to the plastid. The protein localises to the chloroplast. It carries out the reaction ATP + H2O + a folded polypeptide = ADP + phosphate + an unfolded polypeptide.. Its function is as follows. Together with its co-chaperonin GroES, plays an essential role in assisting protein folding. The GroEL-GroES system forms a nano-cage that allows encapsulation of the non-native substrate proteins and provides a physical environment optimized to promote and accelerate protein folding. This is Chaperonin GroEL, chloroplastic from Pyrenomonas salina.